We begin with the raw amino-acid sequence, 218 residues long: Ribonuclease T (218 aa).

The 175-residue stretch at 20–194 (VVIDVETAGF…YDAERTAELF (175 aa)) folds into the Exonuclease domain. Positions 23, 25, 181, and 186 each coordinate Mg(2+). His-181 acts as the Proton donor/acceptor in catalysis.

This sequence belongs to the RNase T family. In terms of assembly, homodimer. Mg(2+) is required as a cofactor.

Its function is as follows. Trims short 3' overhangs of a variety of RNA species, leaving a one or two nucleotide 3' overhang. Responsible for the end-turnover of tRNA: specifically removes the terminal AMP residue from uncharged tRNA (tRNA-C-C-A). Also appears to be involved in tRNA biosynthesis. This Baumannia cicadellinicola subsp. Homalodisca coagulata protein is Ribonuclease T.